A 407-amino-acid chain; its full sequence is Arylacetamide deacetylase-like 3 (407 aa).

The Involved in the stabilization of the negatively charged intermediate by the formation of the oxyanion hole signature appears at 119 to 121; the sequence is HGG. Active-site residues include Ser-193, Asp-347, and His-377.

This sequence belongs to the 'GDXG' lipolytic enzyme family.

The chain is Arylacetamide deacetylase-like 3 (AADACL3) from Homo sapiens (Human).